The chain runs to 311 residues: Malate dehydrogenase (311 aa).

Residues 7–13 (GAAGGIG) and aspartate 34 each bind NAD(+). Substrate contacts are provided by arginine 81 and arginine 87. NAD(+) contacts are provided by residues asparagine 94 and 117-119 (ITN). Positions 119 and 153 each coordinate substrate. Histidine 177 serves as the catalytic Proton acceptor. Methionine 227 serves as a coordination point for NAD(+).

The protein belongs to the LDH/MDH superfamily. MDH type 1 family. As to quaternary structure, homodimer.

The catalysed reaction is (S)-malate + NAD(+) = oxaloacetate + NADH + H(+). Its function is as follows. Catalyzes the reversible oxidation of malate to oxaloacetate. In Shewanella pealeana (strain ATCC 700345 / ANG-SQ1), this protein is Malate dehydrogenase.